A 256-amino-acid polypeptide reads, in one-letter code: 5-keto-4-deoxy-D-glucarate aldolase (256 aa).

The Proton acceptor role is filled by His-50. A substrate-binding site is contributed by Gln-151. Glu-153 provides a ligand contact to Mg(2+). 2 residues coordinate substrate: Ser-178 and Asp-179. Asp-179 is a Mg(2+) binding site.

The protein belongs to the HpcH/HpaI aldolase family. KDGluc aldolase subfamily. As to quaternary structure, homohexamer; trimer of dimers. Requires Mg(2+) as cofactor.

It carries out the reaction 5-dehydro-4-deoxy-D-glucarate = 2-hydroxy-3-oxopropanoate + pyruvate. The enzyme catalyses 2-dehydro-3-deoxy-D-glucarate = 2-hydroxy-3-oxopropanoate + pyruvate. It functions in the pathway carbohydrate acid metabolism; galactarate degradation; D-glycerate from galactarate: step 2/3. Catalyzes the reversible retro-aldol cleavage of both 5-keto-4-deoxy-D-glucarate and 2-keto-3-deoxy-D-glucarate to pyruvate and tartronic semialdehyde. The sequence is that of 5-keto-4-deoxy-D-glucarate aldolase from Salmonella agona (strain SL483).